Here is a 249-residue protein sequence, read N- to C-terminus: MIT domain-containing protein 1 (249 aa).

An MIT domain is found at 8 to 86 (QDPQSTAAAT…KYLDQEKEDG (79 aa)). The interval 168-231 (RGLQEIEESL…SLGYCDFDLR (64 aa)) is important for association with membranes.

Homodimer. Interacts (via MIT domain) with CHMP1A, CHMP1B, CHMP2A and IST1.

It is found in the late endosome membrane. It localises to the midbody. The protein localises to the membrane. Required for efficient abscission at the end of cytokinesis, together with components of the ESCRT-III complex. This chain is MIT domain-containing protein 1 (MITD1), found in Homo sapiens (Human).